A 130-amino-acid polypeptide reads, in one-letter code: MPATVKKTGSKKSKRNVPNGVVHIQSTFNNTIVSITDTSGHVISWSSAGASGFKGARKGTPFAAQTAAEAAARRALDQGMRQIEVLVRGPGAGRETAIRALQVAGLEITLIRDVTPLPHNGCRRPKRRRV.

Belongs to the universal ribosomal protein uS11 family. As to quaternary structure, part of the 30S ribosomal subunit. Interacts with proteins S7 and S18. Binds to IF-3.

In terms of biological role, located on the platform of the 30S subunit, it bridges several disparate RNA helices of the 16S rRNA. Forms part of the Shine-Dalgarno cleft in the 70S ribosome. This Prochlorococcus marinus (strain MIT 9301) protein is Small ribosomal subunit protein uS11.